Here is an 85-residue protein sequence, read N- to C-terminus: U4-theraphotoxin-Hhn1j (85 aa).

An N-terminal signal peptide occupies residues 1–22; that stretch reads MKVTLIAILTCAAVLVLHTTAA. Positions 23-48 are excised as a propeptide; it reads EELEAESQLMEVGMPDTELAAVDEER. Cystine bridges form between Cys52–Cys66, Cys56–Cys77, and Cys71–Cys82.

The protein belongs to the neurotoxin 12 (Hwtx-2) family. 02 (Hwtx-2) subfamily. Expressed by the venom gland.

It localises to the secreted. In terms of biological role, postsynaptic neurotoxin. The sequence is that of U4-theraphotoxin-Hhn1j from Cyriopagopus hainanus (Chinese bird spider).